Consider the following 69-residue polypeptide: NAD(P)H-quinone oxidoreductase subunit L (69 aa).

2 helical membrane-spanning segments follow: residues 5–25 and 40–60; these read LILLLGLLGGYLLVMPAITYF and GFMYFLVFFFFPSLLLLSPFL.

This sequence belongs to the complex I NdhL subunit family. In terms of assembly, NDH-1 can be composed of about 15 different subunits; different subcomplexes with different compositions have been identified which probably have different functions.

The protein localises to the cellular thylakoid membrane. The enzyme catalyses a plastoquinone + NADH + (n+1) H(+)(in) = a plastoquinol + NAD(+) + n H(+)(out). The catalysed reaction is a plastoquinone + NADPH + (n+1) H(+)(in) = a plastoquinol + NADP(+) + n H(+)(out). Functionally, NDH-1 shuttles electrons from an unknown electron donor, via FMN and iron-sulfur (Fe-S) centers, to quinones in the respiratory and/or the photosynthetic chain. The immediate electron acceptor for the enzyme in this species is believed to be plastoquinone. Couples the redox reaction to proton translocation, and thus conserves the redox energy in a proton gradient. Cyanobacterial NDH-1 also plays a role in inorganic carbon-concentration. This Acaryochloris marina (strain MBIC 11017) protein is NAD(P)H-quinone oxidoreductase subunit L.